The chain runs to 407 residues: Methyltransferase/ribosomally synthesized type I borosin cyclic peptide precursor ceuMA2 (407 aa).

Residues 1–246 (MATTKTGSLT…TTSTLYIPPR (246 aa)) are methyltransferase domain. Catalysis depends on residues Arg70, Tyr74, and Tyr96. S-adenosyl-L-methionine contacts are provided by Tyr96, His98, Val101, Ala128, Gln170, Gly208, Ser239, and Thr240. A clasp domain region spans residues 247-370 (EIAPVDQRIM…GPVYKVMRAT (124 aa)). The tract at residues 371 to 393 (PAAIAAGQEHSLDEIAGSADSES) is precursor leader. 2 positions are modified to N-methylthreonine: Thr399 and Thr400. Ile401 is subject to N-methylisoleucine. N-methylvaline is present on residues Val402 and Val403. At Ile404 the chain carries N-methylisoleucine. Val405 bears the N-methylvaline mark. Position 406 is an N-methylhistidine (His406).

In the N-terminal section; belongs to the precorrin methyltransferase family. Homodimer. In terms of processing, ceuMA2 automethylates at Thr-399, Thr-400, Ile-401, Val-402, Val-403, Ile-404, Val-405 and His-406 before being processed by a prolyloligopeptidase which likely forms a peptidyl ester upon removal of the follower propeptide, which then undergoes macrocyclization with the N-terminus of the modified core peptide. Peptide backbone alpha-N-methylations change the physicochemical properties of amide bonds to provide structural constraints and other favorable characteristics including biological membrane permeability to peptides.

The protein operates within secondary metabolite biosynthesis. Functionally, fusion protein of the methyltransferase ceuM2 and a type I borosin core peptide; part of the gene cluster that mediates the biosynthesis of a type I borosin, a highly methylated cyclic peptide with potent biological activities. Type I borosins derive from the C-terminus of the fusion protein, and it is the same protein that methylates its own C-terminus using S-adenosyl methionine (SAM). The C-terminus is subsequently cleaved off and macrocyclized by a prolyloligopeptidase to give the final product. The protein is Methyltransferase/ribosomally synthesized type I borosin cyclic peptide precursor ceuMA2 of Cerrena unicolor (Canker rot fungus).